A 402-amino-acid polypeptide reads, in one-letter code: Nodulation protein E (402 aa).

In terms of domain architecture, Ketosynthase family 3 (KS3) spans 2-401 (DRRVVITGIG…GMNAVLAFRQ (400 aa)). Active-site for beta-ketoacyl synthase activity residues include cysteine 162, histidine 294, and histidine 331. The chain crosses the membrane as a helical span at residues 329–348 (HAHCLGAASALEMIACVMAI).

The protein belongs to the thiolase-like superfamily. Beta-ketoacyl-ACP synthases family.

The protein resides in the cell inner membrane. In terms of biological role, proposed to synthesize NOD factor fatty acyl chain. Involved in the synthesis of a highly unsaturated fatty acid moiety, which forms part of a lipo-oligosaccharide that is responsible for host specificity. The chain is Nodulation protein E (nodE) from Rhizobium sp. (strain N33).